The sequence spans 358 residues: tRNA pseudouridine synthase D (358 aa).

Residue Asp-84 is the Nucleophile of the active site. The TRUD domain maps to Gly-161–Asp-312.

This sequence belongs to the pseudouridine synthase TruD family.

It catalyses the reaction uridine(13) in tRNA = pseudouridine(13) in tRNA. In terms of biological role, responsible for synthesis of pseudouridine from uracil-13 in transfer RNAs. This Nitrosococcus oceani (strain ATCC 19707 / BCRC 17464 / JCM 30415 / NCIMB 11848 / C-107) protein is tRNA pseudouridine synthase D.